The following is a 1450-amino-acid chain: MEAGYAEIAAVQFNIAGDNDHKRQGVMEVTISNLFEGTLPAEGGIYDARMGTTDHHYKCITCSHQRKQCMGHPGILQMHAPVLQPLFIAEIRRWLRVICLNCGAPIVDLKRYEHLIRPKRLIEAASSQTEGKQCYVCKAVHPKIIKDSEDYFTFWVDQQGKIDKLYPQIIREIFSRVTYDTVVKLGRSKNSHPEKLVLKAIQIPPISIRPGIRLGIGSGPQSFHDINNVIQYLVRKNLLIPKDLQIVRGQKIPLNIDRNLQTIQQLYYNFLLDSVSTTATQGGTGKRGIVMGARPAPSIMRRLPRKEGRIRKSLLGSQVWSISRSTICGNSDLHLDEVGYPISFARTLQVAETVQHYNINRLMPYFLNGKRQYPGCSRVYKQITQSVHDIEGLKQDFRLEVGDILYRDVVTGDVAFFNRQPSLERSSIGVHRIVVLENPKISTFQMNVSACAWYNADFDGDQMNLWVPWSVMSRVEAELLCSVRNWFISTKSSGPVNGQVQDSTVGSFLLTRTNTPMGKNVMNKLHAMGLFQTTQTDPPCFANYSPTDLLDGKSVVSMLLRQTPINYQRAPTWYSEVYAPYMHYNKQDISTQIRNGELIEGVLDKKAVGAGSSGGIYHLISRRYGPQQALKMIFATQQLALNYVRNAGFTVSTADMLLTPEAHQEVQEIINELLLESEEINNRLLHGDIMPPIGLTTHDFYEKLQLNALKFPDRILKPIMNSINPETNGLFQMVATGAKGSNPNMIHIMAGIGQIEINTQRIQPQFSFGRTLVYYPRFALEAQAYGFICNSYIAGLTSPEFIFGEMNGRFDLINKALSTSSTGYANRKAIFGLQSCIVDYYRRVSIDTRLVQQLYGEDGLDARQLETVRFETIMLSDQELEDKFKYTGIQSPLFEEEFSRLKKDRDKYRQIFLNVENFNFSQLLTDVRQVPVNVASIVKNILLSSASGVLPFDEKTILQKYTMVKTFCKNLPYVFINNIQERLQTPIPVYLKRAASLMRMLIRIELATVKTLNITCEQMSAILDLIRLQYTQSLINYGEAVGILAAQSVSEPLTQYMLDSHHRSVAGGTNKSGIVRPQEIFSAKPVEAEQSSEMLLRLKNPEVETNKTYAQEIANSIELITFERLILQWHLLYETYSSTKKNVMYPDFASDVEWMTDFLENHPLLQPPEDIANWCIRLELNKTTMILKSISLESIINSLRAKHPNTYIMHSVENTASGIPIIIRIYLRESAFRRSTNTRMATDEKIAVNVVDKLLNSTIRGIPGIKNANVVKLMRHRVDAQGKLVRLDNIYAIKTNGTNIFGAMLDDNIDPYTIVSSSIGDTMELYGIEAARQKIISEIRTVMGDKGPNHRHLLMYADLMTRTGQVTSLEKAGLNAREPSNVLLRMALSSPVQVLTDAAVDSAVNPIYGIAAPTLMGSVPRIGTMYSDIIMDEKYITENYKSVDSMIDML.

The protein belongs to the RNA polymerase beta' chain family. As to quaternary structure, part of the viral DNA-directed RNA polymerase that consists of 8 polII-like subunits (RPB1, RPB2, RPB3, RPB5, RPB6, RPB7, RPB9, RPB10), a capping enzyme and a termination factor.

It localises to the virion. It carries out the reaction RNA(n) + a ribonucleoside 5'-triphosphate = RNA(n+1) + diphosphate. Catalytic component of the DNA-directed RNA polymerase (RNAP) that catalyzes the transcription in the cytoplasm of viral DNA into RNA using the four ribonucleoside triphosphates as substrates. Forms the polymerase active center together with RPB2. Part of the core element with the central large cleft, the clamp element that moves to open and close the cleft and the jaws that are thought to grab the incoming DNA template. The chain is DNA-directed RNA polymerase RPB1 homolog from African swine fever virus (isolate Warthog/Namibia/Wart80/1980) (ASFV).